The following is a 1032-amino-acid chain: Exo-beta-D-glucosaminidase (1032 aa).

Positions 1–32 (MSFRQKRTRIPLLAMTVTALAAAVCGVTTAPA) are cleaved as a signal peptide. Residues 33–46 (ATGAEVAVPLSVGA) constitute a propeptide that is removed on maturation. The Proton donor role is filled by D469. The active-site Nucleophile is the E541. The segment at 883-908 (SVRISGWNTGTQTVPADGSGPGPSDP) is disordered. Residues 909–1032 (VDYQAEDATI…GGPNVDKITL (124 aa)) form the CBM6 domain.

The protein belongs to the glycosyl hydrolase 2 family. In terms of assembly, monomer.

It localises to the secreted. The enzyme catalyses Hydrolysis of chitosan or chitosan oligosaccharides to remove successive D-glucosamine residues from the non-reducing termini.. Functionally, hydrolyzes chitosan and chitooligosaccharides with retention of anomeric configuration. Has maximum activity on chitotetraose, chitopentaose and their corresponding alcohols, with a slight decrease in the rate of hydrolysis on longer chains. Has no activity against beta-D-glucopyranoside, beta-D-xylopyranoside, beta-D-mannoside, beta-D-glucuronide, beta-D-galactoside, beta-D-N-acetylgalactosamide, beta-D-N-acetylglucosaminide and alpha-D-N-acetylglucosaminide. The chain is Exo-beta-D-glucosaminidase from Amycolatopsis orientalis (Nocardia orientalis).